The following is a 601-amino-acid chain: NADH-ubiquinone oxidoreductase chain 5 (601 aa).

Helical transmembrane passes span 5 to 25 (ITSL…TLSF), 37 to 54 (YMRN…IYID), 83 to 105 (YCLT…SLWY), 112 to 129 (TLFF…LFFL), 134 to 156 (LLQL…NWWH), 169 to 189 (IIYN…SALF), 209 to 231 (WLPL…LHPW), 240 to 260 (TPVS…FLLI), 271 to 291 (MIIS…ALCA), 300 to 320 (IIAF…GINQ), 323 to 343 (LAFL…LCSA), 363 to 383 (LILP…MGMP), 400 to 420 (MSYV…LTSI), 451 to 471 (PLIR…TFFL), 478 to 498 (FSIP…VSSL), 508 to 528 (FSHM…AIFH), and 581 to 601 (NYIT…ALYF).

Belongs to the complex I subunit 5 family.

The protein resides in the mitochondrion inner membrane. It carries out the reaction a ubiquinone + NADH + 5 H(+)(in) = a ubiquinol + NAD(+) + 4 H(+)(out). Core subunit of the mitochondrial membrane respiratory chain NADH dehydrogenase (Complex I) that is believed to belong to the minimal assembly required for catalysis. Complex I functions in the transfer of electrons from NADH to the respiratory chain. The immediate electron acceptor for the enzyme is believed to be ubiquinone. The sequence is that of NADH-ubiquinone oxidoreductase chain 5 (MT-ND5) from Myxine glutinosa (Atlantic hagfish).